Here is a 492-residue protein sequence, read N- to C-terminus: Catalase isozyme 1 (492 aa).

Active-site residues include H65 and N138. Y348 lines the heme pocket.

This sequence belongs to the catalase family. As to quaternary structure, homotetramer. Requires heme as cofactor. In whole endosperms (aleurones plus starchy endosperm), in isolated aleurones and in developing seeds.

It is found in the peroxisome. Its subcellular location is the glyoxysome. The catalysed reaction is 2 H2O2 = O2 + 2 H2O. Occurs in almost all aerobically respiring organisms and serves to protect cells from the toxic effects of hydrogen peroxide. The protein is Catalase isozyme 1 (CAT1) of Hordeum vulgare (Barley).